The sequence spans 117 residues: Large ribosomal subunit protein bL17 (117 aa).

It belongs to the bacterial ribosomal protein bL17 family. In terms of assembly, part of the 50S ribosomal subunit. Contacts protein L32.

The polypeptide is Large ribosomal subunit protein bL17 (Coprothermobacter proteolyticus (strain ATCC 35245 / DSM 5265 / OCM 4 / BT)).